The following is a 266-amino-acid chain: Methylsterol monooxygenase 2-2 (266 aa).

3 helical membrane passes run Ile-24 to Leu-44, Arg-71 to Phe-91, and Glu-107 to His-127. The Fatty acid hydroxylase domain occupies Leu-113–Thr-247. A Histidine box-1 motif is present at residues His-127–His-131. Residues His-140 to His-144 carry the Histidine box-2 motif. Residues Ile-162 to Thr-182 form a helical membrane-spanning segment. The Histidine box-3 signature appears at Phe-219–Arg-225.

The protein belongs to the sterol desaturase family. Requires Fe cation as cofactor. Expressed in shoots, roots, siliques and flowers, and, slightly, in developing seeds.

The protein localises to the endoplasmic reticulum membrane. It catalyses the reaction 4,4-dimethyl-5alpha-cholest-7-en-3beta-ol + 6 Fe(II)-[cytochrome b5] + 3 O2 + 5 H(+) = 4alpha-carboxy-4beta-methyl-5alpha-cholest-7-ene-3beta-ol + 6 Fe(III)-[cytochrome b5] + 4 H2O. The enzyme catalyses 24-methylidenelophenol + 6 Fe(II)-[cytochrome b5] + 3 O2 + 5 H(+) = 4alpha-carboxy-ergosta-7,24(24(1))-dien-3beta-ol + 6 Fe(III)-[cytochrome b5] + 4 H2O. Functionally, non-heme iron oxygenase involved in sterols biosynthesis by catalyzing the removal of the second methyl group at the C-4 position. 24-ethylidenelophenol and 24-ethyllophenol are the preferred substrates. Together with SMO2-1, required during embryogenesis, probably by maintaining sterols and auxin homeostasis. This chain is Methylsterol monooxygenase 2-2, found in Arabidopsis thaliana (Mouse-ear cress).